The primary structure comprises 422 residues: Histidinol dehydrogenase (422 aa).

3 residues coordinate NAD(+): Tyr123, Gln183, and Asn206. Residues Ser229, Gln251, and His254 each contribute to the substrate site. Zn(2+)-binding residues include Gln251 and His254. Residues Glu320 and His321 each act as proton acceptor in the active site. Substrate contacts are provided by His321, Asp354, Glu408, and His413. Asp354 contacts Zn(2+). A Zn(2+)-binding site is contributed by His413.

This sequence belongs to the histidinol dehydrogenase family. Zn(2+) serves as cofactor.

It carries out the reaction L-histidinol + 2 NAD(+) + H2O = L-histidine + 2 NADH + 3 H(+). It participates in amino-acid biosynthesis; L-histidine biosynthesis; L-histidine from 5-phospho-alpha-D-ribose 1-diphosphate: step 9/9. Catalyzes the sequential NAD-dependent oxidations of L-histidinol to L-histidinaldehyde and then to L-histidine. The chain is Histidinol dehydrogenase from Natronomonas pharaonis (strain ATCC 35678 / DSM 2160 / CIP 103997 / JCM 8858 / NBRC 14720 / NCIMB 2260 / Gabara) (Halobacterium pharaonis).